The following is a 77-amino-acid chain: uncharacterized protein (77 aa).

The span at 1 to 10 (MFNNKGRRNV) shows a compositional bias: basic residues. A disordered region spans residues 1 to 21 (MFNNKGRRNVRNNEVRRNVPV). Over residues 11-21 (RNNEVRRNVPV) the composition is skewed to basic and acidic residues. The region spanning 20–77 (PVKEGETYTVTIEDMGRGGDGIARVEGFVVFVPETQKGETVNVKITAVKSKFAFAEKI) is the TRAM domain.

This is an uncharacterized protein from Methanocaldococcus jannaschii (strain ATCC 43067 / DSM 2661 / JAL-1 / JCM 10045 / NBRC 100440) (Methanococcus jannaschii).